The chain runs to 215 residues: LexA repressor (215 aa).

A DNA-binding region (H-T-H motif) is located at residues 28–48; it reads RAEIAAELGFSSPNAAEEHLR. Active-site for autocatalytic cleavage activity residues include serine 133 and lysine 170.

The protein belongs to the peptidase S24 family. In terms of assembly, homodimer.

The enzyme catalyses Hydrolysis of Ala-|-Gly bond in repressor LexA.. In terms of biological role, represses a number of genes involved in the response to DNA damage (SOS response), including recA and lexA. In the presence of single-stranded DNA, RecA interacts with LexA causing an autocatalytic cleavage which disrupts the DNA-binding part of LexA, leading to derepression of the SOS regulon and eventually DNA repair. This is LexA repressor from Burkholderia ambifaria (strain ATCC BAA-244 / DSM 16087 / CCUG 44356 / LMG 19182 / AMMD) (Burkholderia cepacia (strain AMMD)).